Reading from the N-terminus, the 121-residue chain is Basic phospholipase A2 BmjeTX-II (121 aa).

Intrachain disulfides connect Cys26-Cys114, Cys28-Cys45, Cys44-Cys95, Cys50-Cys121, Cys51-Cys88, Cys58-Cys82, and Cys76-Cys86. Ca(2+) is bound by residues Tyr27, Gly29, and Gly31. Residue His48 is part of the active site. Asp49 contacts Ca(2+). Residue Asp89 is part of the active site.

Ca(2+) serves as cofactor. Expressed by the venom gland.

Its subcellular location is the secreted. The catalysed reaction is a 1,2-diacyl-sn-glycero-3-phosphocholine + H2O = a 1-acyl-sn-glycero-3-phosphocholine + a fatty acid + H(+). In terms of biological role, snake venom phospholipase A2 (PLA2) that induces blockade of neuromuscular contraction in an indirectly stimulated chick biventer cervicis nerve-muscle preparation. Does not inhibit contraction of chick biventer cervicic nerve-muscle preparation in response to treatment with acetylcholine or KCl. The neuromuscular blockade is mediated by inhibitory action at the presynaptic motor nerve endings. Lyses skeletal myoblasts and myotubes in vitro, and intramuscular injection causes local muscle necrosis. Induces edema in the mouse foot pad. Induces a transient increase of IL-6 levels. PLA2 catalyzes the calcium-dependent hydrolysis of the 2-acyl groups in 3-sn-phosphoglycerides. This is Basic phospholipase A2 BmjeTX-II from Bothrops marajoensis (Marajo lancehead).